The chain runs to 302 residues: Small ribosomal subunit protein uS3 (302 aa).

The 70-residue stretch at 17–86 folds into the KH type-2 domain; the sequence is IDEFFAEELA…DPQIDVQEVE (70 aa). The interval 222–302 is disordered; that stretch reads EDADAEDADA…EMDDEDGGAE (81 aa).

Belongs to the universal ribosomal protein uS3 family. Part of the 30S ribosomal subunit.

In terms of biological role, binds the lower part of the 30S subunit head. In Halobacterium salinarum (strain ATCC 700922 / JCM 11081 / NRC-1) (Halobacterium halobium), this protein is Small ribosomal subunit protein uS3.